The sequence spans 898 residues: Dipeptidyl peptidase 8 (898 aa).

Residues Ser755, Asp833, and His865 each act as charge relay system in the active site.

This sequence belongs to the peptidase S9B family. DPPIV subfamily. Homodimer. Forms a ternary complex with NLRP1, composed of a DPP8 homodimer, one full-length NLRP1 protein, and one cleaved C-terminus of NLRP1 (NACHT, LRR and PYD domains-containing protein 1, C-terminus). Forms a ternary complex with CARD8, composed of a DPP8 homodimer, one full-length NLRP1 protein, and one cleaved C-terminus of CARD8 (Caspase recruitment domain-containing protein 8, C-terminus). In the ternary complex, only one subunit of the DPP8 homodimer is bound to NLRP1 or CARD8. Ubiquitously expressed, with highest levels in testis, placenta, prostate, muscle and brain.

It localises to the cytoplasm. The enzyme catalyses Release of an N-terminal dipeptide, Xaa-Yaa-|-Zaa-, from a polypeptide, preferentially when Yaa is Pro, provided Zaa is neither Pro nor hydroxyproline.. Inhibited by zinc. Inhibited by the serine proteinase inhibitor 4-(2-aminoethyl)benzenesulphonyl fluoride (AEBSF), and by di-isopropylfluorophosphate. Specifically inhibited by isoindoline derivatives. Inhibited by Val-boroPro (Talabostat, PT-100), a non-selective inhibitor, which triggers pyroptosis in monocytes and macrophages. Dipeptidyl peptidase that cleaves off N-terminal dipeptides from proteins having a Pro or Ala residue at position 2. Acts as a key inhibitor of caspase-1-dependent monocyte and macrophage pyroptosis in resting cells by preventing activation of NLRP1 and CARD8. Sequesters the cleaved C-terminal part of NLRP1 and CARD8, which respectively constitute the active part of the NLRP1 and CARD8 inflammasomes, in a ternary complex, thereby preventing their oligomerization and activation. The dipeptidyl peptidase activity is required to suppress NLRP1 and CARD8; however, neither NLRP1 nor CARD8 are bona fide substrates of DPP8, suggesting the existence of substrate(s) required for NLRP1 and CARD8 inhibition. The protein is Dipeptidyl peptidase 8 of Homo sapiens (Human).